The primary structure comprises 216 residues: NKG2-D type II integral membrane protein (216 aa).

Topologically, residues 1–51 (MGWIRGRRPRHNLEMSEFHNYKLGLAKSDFSTRCQKQRCPVIKSKCRENAS) are cytoplasmic. A helical; Signal-anchor for type II membrane protein transmembrane segment spans residues 52–72 (PLFFCCFIAVAMGIRFIIMVT). The Extracellular segment spans residues 73-216 (IWSAVFLNSL…NTYICMQRTV (144 aa)). 2 cysteine pairs are disulfide-bonded: Cys-96–Cys-105 and Cys-99–Cys-110. Positions 98-213 (PCPKNWICYK…SIPNTYICMQ (116 aa)) constitute a C-type lectin domain. Asn-115, Asn-131, Asn-163, and Asn-202 each carry an N-linked (GlcNAc...) asparagine glycan. 2 disulfide bridges follow: Cys-127/Cys-211 and Cys-189/Cys-203.

Homodimer; disulfide-linked. Heterohexamer composed of two subunits of KLRK1 and four subunits of HCST/DAP10. Interacts (via transmembrane domain) with HCST/DAP10 (via transmembrane domain); the interaction is required for KLRK1 NK cell surface and induces NK cell-mediated cytotoxicity. Can form disulfide-bonded heterodimer with CD94. Interacts with CEACAM1; recruits PTPN6 that dephosphorylates VAV1. Natural killer cells.

Its subcellular location is the cell membrane. Functionally, functions as an activating and costimulatory receptor involved in immunosurveillance upon binding to various cellular stress-inducible ligands displayed at the surface of autologous tumor cells and virus-infected cells. Provides both stimulatory and costimulatory innate immune responses on activated killer (NK) cells, leading to cytotoxic activity. Acts as a costimulatory receptor for T-cell receptor (TCR) in CD8(+) T-cell-mediated adaptive immune responses by amplifying T-cell activation. Stimulates perforin-mediated elimination of ligand-expressing tumor cells. Signaling involves calcium influx, culminating in the expression of TNF-alpha. Participates in NK cell-mediated bone marrow graft rejection. May play a regulatory role in differentiation and survival of NK cells. Binds to ligands belonging to various subfamilies of MHC class I-related glycoproteins. The protein is NKG2-D type II integral membrane protein (KLRK1) of Macaca fascicularis (Crab-eating macaque).